The following is a 273-amino-acid chain: Mitochondrial distribution and morphology protein 12 (273 aa).

The SMP-LTD domain maps to 1 to 273 (MSIDFDWSKL…LVWPSYITIE (273 aa)). The segment at 124–145 (LTSPIPESRPSTPMDNHQERDR) is disordered.

Belongs to the MDM12 family. As to quaternary structure, component of the ER-mitochondria encounter structure (ERMES) or MDM complex, composed of mmm1, mdm10, mdm12 and mdm34. A mmm1 homodimer associates with one molecule of mdm12 on each side in a pairwise head-to-tail manner, and the SMP-LTD domains of mmm1 and mdm12 generate a continuous hydrophobic tunnel for phospholipid trafficking.

The protein resides in the mitochondrion outer membrane. Its subcellular location is the endoplasmic reticulum membrane. Functionally, component of the ERMES/MDM complex, which serves as a molecular tether to connect the endoplasmic reticulum (ER) and mitochondria. Components of this complex are involved in the control of mitochondrial shape and protein biogenesis, and function in nonvesicular lipid trafficking between the ER and mitochondria. Mdm12 is required for the interaction of the ER-resident membrane protein mmm1 and the outer mitochondrial membrane-resident beta-barrel protein mdm10. The mdm12-mmm1 subcomplex functions in the major beta-barrel assembly pathway that is responsible for biogenesis of all mitochondrial outer membrane beta-barrel proteins, and acts in a late step after the SAM complex. The mdm10-mdm12-mmm1 subcomplex further acts in the TOM40-specific pathway after the action of the mdm12-mmm1 complex. Essential for establishing and maintaining the structure of mitochondria and maintenance of mtDNA nucleoids. In Schizosaccharomyces pombe (strain 972 / ATCC 24843) (Fission yeast), this protein is Mitochondrial distribution and morphology protein 12.